The chain runs to 482 residues: uncharacterized protein (482 aa).

In terms of domain architecture, AB hydrolase-1 spans 231–459 (FEGNAGFYEI…FDACNHYLID (229 aa)).

This is an uncharacterized protein from Caenorhabditis elegans.